The following is a 411-amino-acid chain: Imidazolonepropionase (411 aa).

Positions 75 and 77 each coordinate Fe(3+). The Zn(2+) site is built by His75 and His77. The 4-imidazolone-5-propanoate site is built by Arg84, Tyr147, and His180. An N-formimidoyl-L-glutamate-binding site is contributed by Tyr147. Residue His245 participates in Fe(3+) binding. His245 contributes to the Zn(2+) binding site. Gln248 provides a ligand contact to 4-imidazolone-5-propanoate. Asp320 lines the Fe(3+) pocket. Asp320 serves as a coordination point for Zn(2+). 2 residues coordinate N-formimidoyl-L-glutamate: Asn322 and Gly324. Thr325 lines the 4-imidazolone-5-propanoate pocket.

It belongs to the metallo-dependent hydrolases superfamily. HutI family. Zn(2+) is required as a cofactor. It depends on Fe(3+) as a cofactor.

It localises to the cytoplasm. The enzyme catalyses 4-imidazolone-5-propanoate + H2O = N-formimidoyl-L-glutamate. The protein operates within amino-acid degradation; L-histidine degradation into L-glutamate; N-formimidoyl-L-glutamate from L-histidine: step 3/3. In terms of biological role, catalyzes the hydrolytic cleavage of the carbon-nitrogen bond in imidazolone-5-propanoate to yield N-formimidoyl-L-glutamate. It is the third step in the universal histidine degradation pathway. The chain is Imidazolonepropionase from Photobacterium profundum (strain SS9).